The following is a 282-amino-acid chain: 4-diphosphocytidyl-2-C-methyl-D-erythritol kinase (282 aa).

Residue K12 is part of the active site. 95 to 105 contributes to the ATP binding site; sequence PMGGGIGGGSS. Residue D137 is part of the active site.

The protein belongs to the GHMP kinase family. IspE subfamily.

It catalyses the reaction 4-CDP-2-C-methyl-D-erythritol + ATP = 4-CDP-2-C-methyl-D-erythritol 2-phosphate + ADP + H(+). Its pathway is isoprenoid biosynthesis; isopentenyl diphosphate biosynthesis via DXP pathway; isopentenyl diphosphate from 1-deoxy-D-xylulose 5-phosphate: step 3/6. In terms of biological role, catalyzes the phosphorylation of the position 2 hydroxy group of 4-diphosphocytidyl-2C-methyl-D-erythritol. This is 4-diphosphocytidyl-2-C-methyl-D-erythritol kinase from Pseudomonas aeruginosa (strain UCBPP-PA14).